The chain runs to 394 residues: Probable ribosome production factor 1 (394 aa).

Disordered stretches follow at residues 1 to 98 (MIKI…PVLN) and 116 to 152 (MKKE…EKDQ). Acidic residues-rich tracts occupy residues 15-33 (QDSD…DLEV) and 59-88 (ASED…DDDD). Basic residues predominate over residues 116 to 134 (MKKEKHKKKMQERRARRKA). Positions 185-369 (PKVLITFADN…LRSLQEGTFD (185 aa)) constitute a Brix domain. The interval 347-364 (VKLRELGPRFTLKLRSLQ) is RNA-binding.

It localises to the nucleus. Its subcellular location is the nucleolus. Its function is as follows. May be required for ribosome biogenesis. The chain is Probable ribosome production factor 1 from Drosophila melanogaster (Fruit fly).